The chain runs to 416 residues: Phosphatidylinositol 5-phosphate 4-kinase type-2 beta (416 aa).

Position 2 is an N-acetylserine (serine 2). Phosphothreonine is present on threonine 8. Serine 19 is subject to Phosphoserine. The PIPK domain occupies 38–415 (ASEPILSVLM…RFNEFMSNIL (378 aa)). The segment at 64 to 70 (VMLMPDD) is required for interaction with PIP5K1A. Lysine 94 and lysine 150 each carry N6-acetyllysine. ATP contacts are provided by residues 202–204 (RNV) and lysine 214. GTP-binding positions include 203–204 (NV) and lysine 214. Residue threonine 322 is modified to Phosphothreonine. At serine 326 the chain carries Phosphoserine. Residue aspartate 369 coordinates GTP.

In terms of assembly, homodimer. Binds TNFRSF1A. Interacts with PIP4K2A; the interaction suppresses ubiquitination by the SPOP/CUL3 complex. Probably interacts with PIP5K1A; the interaction inhibits PIP5K1A kinase activity. Ubiquitinated by the SPOP/CUL3 complex. Ubiquitination is stimulated by PtdIns5P levels. In terms of processing, phosphorylated on serine residues.

The protein resides in the endoplasmic reticulum membrane. The protein localises to the cell membrane. It is found in the nucleus. It localises to the cytoplasm. It carries out the reaction a 1,2-diacyl-sn-glycero-3-phospho-(1D-myo-inositol-5-phosphate) + ATP = a 1,2-diacyl-sn-glycero-3-phospho-(1D-myo-inositol-4,5-bisphosphate) + ADP + H(+). The enzyme catalyses 1,2-dihexadecanoyl-sn-glycero-3-phospho-(1D-myo-inositol-5-phosphate) + ATP = 1,2-dihexadecanoyl-sn-glycero-3-phospho-(1D-myo-inositol-4,5-bisphosphate) + ADP + H(+). The catalysed reaction is 1,2-dihexadecanoyl-sn-glycero-3-phospho-(1D-myo-inositol-5-phosphate) + GTP = 1,2-dihexadecanoyl-sn-glycero-3-phospho-(1D-myo-inositol-4,5-bisphosphate) + GDP + H(+). Its function is as follows. Participates in the biosynthesis of phosphatidylinositol 4,5-bisphosphate. Preferentially utilizes GTP, rather than ATP, for PI(5)P phosphorylation and its activity reflects changes in direct proportion to the physiological GTP concentration. Its GTP-sensing activity is critical for metabolic adaptation. PIP4Ks negatively regulate insulin signaling through a catalytic-independent mechanism. They interact with PIP5Ks and suppress PIP5K-mediated PtdIns(4,5)P2 synthesis and insulin-dependent conversion to PtdIns(3,4,5)P3. The chain is Phosphatidylinositol 5-phosphate 4-kinase type-2 beta from Rattus norvegicus (Rat).